We begin with the raw amino-acid sequence, 380 residues long: L-lactate dehydrogenase (380 aa).

An FMN hydroxy acid dehydrogenase domain is found at 1-380; that stretch reads MIISSPNDYR…TRDSLVGLPR (380 aa). Residue Tyr24 participates in substrate binding. FMN-binding residues include Ser106 and Gln127. Tyr129 provides a ligand contact to substrate. Thr155 contacts FMN. Arg164 lines the substrate pocket. Lys251 provides a ligand contact to FMN. His275 serves as the catalytic Proton acceptor. Arg278 is a substrate binding site. 306-330 contributes to the FMN binding site; that stretch reads DSGIRTGLDVVRMLALGAKGVLLGR.

This sequence belongs to the FMN-dependent alpha-hydroxy acid dehydrogenase family. FMN is required as a cofactor.

It is found in the cell inner membrane. It carries out the reaction (S)-lactate + A = pyruvate + AH2. Its function is as follows. Catalyzes the conversion of L-lactate to pyruvate. Is coupled to the respiratory chain. The chain is L-lactate dehydrogenase from Azorhizobium caulinodans (strain ATCC 43989 / DSM 5975 / JCM 20966 / LMG 6465 / NBRC 14845 / NCIMB 13405 / ORS 571).